A 488-amino-acid chain; its full sequence is 3-octaprenyl-4-hydroxybenzoate carboxy-lyase (488 aa).

N172 is a binding site for Mn(2+). Prenylated FMN-binding positions include 175-177 (IYR), 189-191 (RWL), and 194-195 (RG). E238 lines the Mn(2+) pocket. D287 functions as the Proton donor in the catalytic mechanism.

The protein belongs to the UbiD family. In terms of assembly, homohexamer. It depends on prenylated FMN as a cofactor. The cofactor is Mn(2+).

The protein localises to the cell membrane. The enzyme catalyses a 4-hydroxy-3-(all-trans-polyprenyl)benzoate + H(+) = a 2-(all-trans-polyprenyl)phenol + CO2. Its pathway is cofactor biosynthesis; ubiquinone biosynthesis. Functionally, catalyzes the decarboxylation of 3-octaprenyl-4-hydroxy benzoate to 2-octaprenylphenol, an intermediate step in ubiquinone biosynthesis. This chain is 3-octaprenyl-4-hydroxybenzoate carboxy-lyase, found in Legionella pneumophila subsp. pneumophila (strain Philadelphia 1 / ATCC 33152 / DSM 7513).